Reading from the N-terminus, the 150-residue chain is Large ribosomal subunit protein bL9 (150 aa).

The protein belongs to the bacterial ribosomal protein bL9 family.

Binds to the 23S rRNA. The sequence is that of Large ribosomal subunit protein bL9 from Streptococcus equi subsp. equi (strain 4047).